The primary structure comprises 489 residues: WD repeat-containing protein JIP5 (489 aa).

The stretch at 4-45 (PLSSDALDLCFHPAAETNLLAVGLISGKIQLINYDDYLSSPS) is one WD 1 repeat. The tract at residues 46–66 (SSRTPLAPPSKKSKPSTISSA) is disordered. One copy of the WD 2 repeat lies at 124-163 (EVHDAAPSRVLPVDESLVVTGDDDGVVRLWDVRKGGGKGI). The tract at residues 192-246 (SIKEAKKSKTQLKKQRRRARQAERLKEHDKEKREQNASDTEASEPDSEDDAAIKV) is disordered. Positions 199–210 (SKTQLKKQRRRA) are enriched in basic residues. Over residues 211-227 (RQAERLKEHDKEKREQN) the composition is skewed to basic and acidic residues. Positions 232-241 (EASEPDSEDD) are enriched in acidic residues. 2 WD repeats span residues 279–318 (DQED…LDHV) and 323–363 (GHPA…GVIA). Residues 417 to 489 (IVGLAEDDSD…AGKGGFFSDL (73 aa)) form a disordered region. Acidic residues-rich tracts occupy residues 421-440 (AEDD…DDDD) and 449-472 (DGAE…DSED).

Belongs to the WD repeat WDR55 family.

It localises to the nucleus. The protein resides in the nucleolus. This Mycosarcoma maydis (Corn smut fungus) protein is WD repeat-containing protein JIP5 (JIP5).